The primary structure comprises 345 residues: uncharacterized protein (345 aa).

It localises to the plastid. Its subcellular location is the chloroplast. This is an uncharacterized protein from Chlamydomonas moewusii (Chlamydomonas eugametos).